We begin with the raw amino-acid sequence, 458 residues long: Protein adenylyltransferase FICD (458 aa).

The Cytoplasmic segment spans residues 1 to 23 (MILMPMASVVAVAEPKWVSVWGR). A helical; Signal-anchor for type II membrane protein transmembrane segment spans residues 24–44 (FLWMTLLSMALGSLLALLLPL). The Lumenal portion of the chain corresponds to 45–458 (GAVEEQCLAV…GFKETLPVRP (414 aa)). O-AMP-serine; by autocatalysis is present on serine 79. An O-AMP-threonine; by autocatalysis modification is found at threonine 80. TPR repeat units follow at residues 106 to 139 (AKAA…DPGF) and 140 to 173 (VDAL…SPFH). Residue threonine 183 is modified to O-AMP-threonine; by autocatalysis. Positions 230–235 (TVAIEG) match the Inhibitory (S/T)XXXE(G/N) motif motif. Glutamate 234 lines the ATP pocket. Residue asparagine 275 is glycosylated (N-linked (GlcNAc...) asparagine). The region spanning 285 to 420 (VTIDHMLEIH…VRPFIRFIAK (136 aa)) is the Fido domain. 316 to 319 (VGHH) serves as a coordination point for ATP. Histidine 363 is a catalytic residue. ATP contacts are provided by residues 367–374 (DGNGRTSR), 399–400 (YY), and asparagine 407.

It belongs to the fic family. In terms of assembly, homodimer. Interacts with HD. Mg(2+) serves as cofactor. The cofactor is Mn(2+). Post-translationally, auto-AMPylated in vitro.

It is found in the endoplasmic reticulum membrane. The enzyme catalyses L-tyrosyl-[protein] + ATP = O-(5'-adenylyl)-L-tyrosyl-[protein] + diphosphate. The catalysed reaction is 3-O-(5'-adenylyl)-L-threonyl-[protein] + H2O = L-threonyl-[protein] + AMP + H(+). It catalyses the reaction L-threonyl-[protein] + ATP = 3-O-(5'-adenylyl)-L-threonyl-[protein] + diphosphate. With respect to regulation, the side chain of Glu-234 determines which of the two opposing activities (AMPylase or de-AMPylase) will take place. In response to endoplasmic reticulum stress, mediates de-AMPylase activity. Adenylyltransferase activity is inhibited by the inhibitory helix present at the N-terminus: Glu-234 binds ATP and competes with ATP-binding at Arg-374, thereby preventing adenylyltransferase activity. In unstressed cells, disengagement of Glu-234 promotes adenylyltransferase activity. Activation dissociates ATP-binding from Glu-234, allowing ordered binding of the entire ATP moiety with the alpha-phosphate in an orientation that is productive for accepting an incoming target hydroxyl side chain. Protein that can both mediate the addition of adenosine 5'-monophosphate (AMP) to specific residues of target proteins (AMPylation), and the removal of the same modification from target proteins (de-AMPylation), depending on the context. The side chain of Glu-231 determines which of the two opposing activities (AMPylase or de-AMPylase) will take place. Acts as a key regulator of the ERN1/IRE1-mediated unfolded protein response (UPR) by mediating AMPylation or de-AMPylation of HSPA5/BiP. In unstressed cells, acts as an adenylyltransferase by mediating AMPylation of HSPA5/BiP at 'Thr-518', thereby inactivating it. In response to endoplasmic reticulum stress, acts as a phosphodiesterase by mediating removal of ATP (de-AMPylation) from HSPA5/BiP at 'Thr-518', leading to restore HSPA5/BiP activity. Although it is able to AMPylate RhoA, Rac and Cdc42 Rho GTPases in vitro, Rho GTPases do not constitute physiological substrates. The sequence is that of Protein adenylyltransferase FICD from Rattus norvegicus (Rat).